Here is a 183-residue protein sequence, read N- to C-terminus: Tetrahydromethanopterin S-methyltransferase subunit A 2 (183 aa).

The Cytoplasmic portion of the chain corresponds to 1–101 (MFLMVEKKPV…TMKALHSNGV (101 aa)). His-87 contacts 5-hydroxybenzimidazolylcob(I)amide. The chain crosses the membrane as a helical span at residues 102–118 (DLETGRIIGATGAIPYI). Topologically, residues 119–183 (ENMPEEAIER…IGKGDSEENT (65 aa)) are extracellular.

The protein belongs to the MtrA family. As to quaternary structure, the complex is composed of 8 subunits; MtrA, MtrB, MtrC, MtrD, MtrE, MtrF, MtrG and MtrH. The cofactor is 5-hydroxybenzimidazolylcob(I)amide.

It is found in the cell membrane. It catalyses the reaction 5-methyl-5,6,7,8-tetrahydromethanopterin + coenzyme M + 2 Na(+)(in) = 5,6,7,8-tetrahydromethanopterin + methyl-coenzyme M + 2 Na(+)(out). The protein operates within one-carbon metabolism; methanogenesis from CO(2); methyl-coenzyme M from 5,10-methylene-5,6,7,8-tetrahydromethanopterin: step 2/2. In terms of biological role, part of a complex that catalyzes the formation of methyl-coenzyme M and tetrahydromethanopterin from coenzyme M and methyl-tetrahydromethanopterin. This is an energy-conserving, sodium-ion translocating step. The sequence is that of Tetrahydromethanopterin S-methyltransferase subunit A 2 from Methanothermobacter thermautotrophicus (strain ATCC 29096 / DSM 1053 / JCM 10044 / NBRC 100330 / Delta H) (Methanobacterium thermoautotrophicum).